The primary structure comprises 1785 residues: MDFMSPKFSLTDVEYPAWCQDDEVPITMQEIREIFVELMDKFGFQKSSMENMYQHLMGQLDSRASRTGAQNALVSLHVSYIGGEHANYRKWYFAAQLDLDEEIGFQNMRLHGKARQRNVKMAKKRGVSIKEQIKQWNEKEQEFINNHPKITLTQEQLEDQTNLKSADYKWKLKMKKLTPENMIRQLALYLLCWGEANQVRFAPECLCFIFKCALDYDISTSSSEKTVKSPEYSYLNDVITPLYEFLRGQVYKKDAKGNWKRREKDHKNIIGYDDINQLFWYPEGFERIILNNGERLVDKPLEERYLYFKDVAWSKVFYKTYRETRSWKHCFTNFNRFWIIHFAPFWFFTTFNSPTLYTKNYIQLLNNQPTPQVRLSVIAFGGTIACLVQILATVFEWGFVPREWPGAQHLSSRMIGLLFCLAINLGPSVYVLGFFEWDVHSKSAYIVSIVQLIIAFLTTFFFAVRPLGGLFRPYLNKDKKHRRYISSQTFTASFPKLTGRSKWFSYGLWVFVYLAKYIESYFFLTLSLRDPIRVLSIMDLSRCQGEYLLGPILCKWQAKITLVLMLLSDLGLFFLDTYLWYIICNCIFSIVLSFSLGTSILTPWKNVYSRLPKRIYSKILATSEMDVKFKAKILISQVWNAIVISMYREHLLSIEHLQRLLFQQVDSLMGDTRTLKSPTFFVAQDDSTFKSMEFFPSNSEAKRRISFFAQSLATPISEPVPVDCMPTFTVLVPHYSEKILLGLKEIIREESPKSKITVLEYLKHLHPTEWECFVKDTKLLSMEKSFLKEAESSHDEDRLEIPDALYDPRSSPLSDHTESRKLPTEDDLIKEKINDLPFSYFGFNSSEPSYTLRTRIWASLRTQTLYRTLSGFMNYSKAIKLLYRIENPSLVSLYRGNNEALENDLENMASRKFRMVVAMQRYAKFNKDEVEATELLLRAYPNMFISYLLEELEQNESEKTYYSCLTNGYAEFDEESGLRKPIFKIRLSGNPILGDGKSDNQNHSIIFYRGEYIQVIDANQDNYLEECLKIRSVLSEFEELELNPTIPYIPGIEYEEEPPPIAIVGSREYIFSENIGVLGDIAAGKEQTFGTLFARTLAEIGGKLHYGHPDFLNGIFMTTRGGLSKAQRGLHLNEDIYAGMNAICRGGKIKHSDYYQCGKGRDLGFGSILNFTTKIGAGMGEQLLSREYYYLGTQLPMDRFLSFFYAHPGFHLNNLFISFSVQLFFVLLLNLGALNHEIIACFYDKDAPITNLETPVGCYNIQPALHWVSIFVLSIFIVFFIAFAPLLIQEVLEKGIWRAASRFLHHLLSMAPLFEVFVCQVYSNSLLMDLTFGGAKYISTGRGFAITRLDFFTLYSRFVNISIYSGFQVFFMLLFAIISMWQPALLWFWITVISMCFAPFIFNPHQFAFMDFFIDYKTFIHWLFSGNTKYQKESWANFVKSSRSRFTGYKSKTVDDISEDSGHDSKKARFWNVFFAELFLPFCVFLFNFTAFSFINAQTGVSDSTPTSAVFRLLLVTFLPIFLNSIVLFLLFWVSLFVVPGLSYCCKDAGAVIAFIAHTFSVLVYLLDFELMWFLQGWNFTRTLILLITCINMHLILFKVFTTIFLTREYKNNKAHLAWWNGKWYNTGMGWSIILQPIREYFVKIMESSYFAADFFLGHFLLFIQTPIILLPFIDYWHTMVLFWMNPRSIIAHKRILTRKQRALRSRIVSKYFSLYFVMLGVLLFMLIAPFFAGDFVSSPQELLEGTLFEGIFQPNNQNNNDTGPNAPSTILTTTPTLPTFRTVA.

8 consecutive transmembrane segments (helical) span residues 337 to 357, 375 to 395, 415 to 435, 444 to 464, 508 to 528, 547 to 567, 572 to 592, and 712 to 732; these read FWIIHFAPFWFFTTFNSPTLY, LSVIAFGGTIACLVQILATVF, IGLLFCLAINLGPSVYVLGFF, AYIVSIVQLIIAFLTTFFFAV, LWVFVYLAKYIESYFFLTLSL, YLLGPILCKWQAKITLVLMLL, LFFLDTYLWYIICNCIFSIVL, and LATPISEPVPVDCMPTFTVLV. Basic and acidic residues-rich tracts occupy residues 791-801 and 815-824; these read ESSHDEDRLEI and DHTESRKLPT. The interval 791–824 is disordered; that stretch reads ESSHDEDRLEIPDALYDPRSSPLSDHTESRKLPT. N-linked (GlcNAc...) asparagine glycans are attached at residues Asn-844, Asn-874, Asn-955, Asn-1002, and Asn-1170. 3 helical membrane-spanning segments follow: residues 1215-1235, 1268-1288, and 1303-1323; these read LFISFSVQLFFVLLLNLGALN, VSIFVLSIFIVFFIAFAPLLI, and FLHHLLSMAPLFEVFVCQVYS. An N-linked (GlcNAc...) asparagine glycan is attached at Asn-1360. 5 consecutive transmembrane segments (helical) span residues 1370 to 1390, 1394 to 1414, 1475 to 1495, 1514 to 1534, and 1549 to 1569; these read FFMLLFAIISMWQPALLWFWI, SMCFAPFIFNPHQFAFMDFFI, FAELFLPFCVFLFNFTAFSFI, LLVTFLPIFLNSIVLFLLFWV, and AGAVIAFIAHTFSVLVYLLDF. Asn-1579 carries N-linked (GlcNAc...) asparagine glycosylation. 3 consecutive transmembrane segments (helical) span residues 1585-1605, 1655-1675, and 1713-1733; these read ILLITCINMHLILFKVFTTIF, FFLGHFLLFIQTPIILLPFID, and FSLYFVMLGVLLFMLIAPFFA. Asn-1761 is a glycosylation site (N-linked (GlcNAc...) asparagine).

This sequence belongs to the glycosyltransferase 48 family. N-glycosylated.

It is found in the mitochondrion. Its subcellular location is the membrane. It catalyses the reaction [(1-&gt;3)-beta-D-glucosyl](n) + UDP-alpha-D-glucose = [(1-&gt;3)-beta-D-glucosyl](n+1) + UDP + H(+). Its function is as follows. Required for spore wall assembly. The polypeptide is 1,3-beta-glucan synthase component FKS3 (FKS3) (Saccharomyces cerevisiae (strain ATCC 204508 / S288c) (Baker's yeast)).